The following is a 359-amino-acid chain: 3-dehydroquinate synthase (359 aa).

NAD(+) contacts are provided by residues 70–75 (DGEQYK), 105–109 (GVIGD), 129–130 (TT), lysine 142, lysine 151, and 169–172 (FYKT). Zn(2+)-binding residues include glutamate 184, histidine 247, and histidine 264.

It belongs to the sugar phosphate cyclases superfamily. Dehydroquinate synthase family. Co(2+) is required as a cofactor. Zn(2+) serves as cofactor. Requires NAD(+) as cofactor.

It is found in the cytoplasm. The enzyme catalyses 7-phospho-2-dehydro-3-deoxy-D-arabino-heptonate = 3-dehydroquinate + phosphate. It functions in the pathway metabolic intermediate biosynthesis; chorismate biosynthesis; chorismate from D-erythrose 4-phosphate and phosphoenolpyruvate: step 2/7. Catalyzes the conversion of 3-deoxy-D-arabino-heptulosonate 7-phosphate (DAHP) to dehydroquinate (DHQ). This chain is 3-dehydroquinate synthase, found in Francisella tularensis subsp. tularensis (strain FSC 198).